Here is a 61-residue protein sequence, read N- to C-terminus: MKCLTKYSRVSETSQTCHVWQNLCFKKWQKGKKVSRGCTATCPKPKKDEVIQCCAKDKCNK.

4 disulfide bridges follow: cysteine 3/cysteine 24, cysteine 17/cysteine 38, cysteine 42/cysteine 53, and cysteine 54/cysteine 59.

In terms of tissue distribution, expressed by the venom gland.

The protein localises to the secreted. This Causus rhombeatus (Rhombic night adder) protein is Neurotoxin-like protein 1.